The primary structure comprises 415 residues: Serine hydroxymethyltransferase (415 aa).

Residues L117 and 121 to 123 each bind (6S)-5,6,7,8-tetrahydrofolate; that span reads GHL. K226 is subject to N6-(pyridoxal phosphate)lysine. E241 serves as a coordination point for (6S)-5,6,7,8-tetrahydrofolate.

The protein belongs to the SHMT family. In terms of assembly, homodimer. The cofactor is pyridoxal 5'-phosphate.

The protein localises to the cytoplasm. The enzyme catalyses (6R)-5,10-methylene-5,6,7,8-tetrahydrofolate + glycine + H2O = (6S)-5,6,7,8-tetrahydrofolate + L-serine. The protein operates within one-carbon metabolism; tetrahydrofolate interconversion. Its pathway is amino-acid biosynthesis; glycine biosynthesis; glycine from L-serine: step 1/1. Functionally, catalyzes the reversible interconversion of serine and glycine with tetrahydrofolate (THF) serving as the one-carbon carrier. This reaction serves as the major source of one-carbon groups required for the biosynthesis of purines, thymidylate, methionine, and other important biomolecules. Also exhibits THF-independent aldolase activity toward beta-hydroxyamino acids, producing glycine and aldehydes, via a retro-aldol mechanism. The sequence is that of Serine hydroxymethyltransferase from Bacillus licheniformis (strain ATCC 14580 / DSM 13 / JCM 2505 / CCUG 7422 / NBRC 12200 / NCIMB 9375 / NCTC 10341 / NRRL NRS-1264 / Gibson 46).